The sequence spans 87 residues: DNA-directed RNA polymerase subunit omega (87 aa).

This sequence belongs to the RNA polymerase subunit omega family. The RNAP catalytic core consists of 2 alpha, 1 beta, 1 beta' and 1 omega subunit. When a sigma factor is associated with the core the holoenzyme is formed, which can initiate transcription.

It catalyses the reaction RNA(n) + a ribonucleoside 5'-triphosphate = RNA(n+1) + diphosphate. Functionally, promotes RNA polymerase assembly. Latches the N- and C-terminal regions of the beta' subunit thereby facilitating its interaction with the beta and alpha subunits. This chain is DNA-directed RNA polymerase subunit omega, found in Pseudomonas putida (strain ATCC 700007 / DSM 6899 / JCM 31910 / BCRC 17059 / LMG 24140 / F1).